The following is a 143-amino-acid chain: UPF0225 protein Reut_A0143 (143 aa).

This sequence belongs to the UPF0225 family.

This Cupriavidus pinatubonensis (strain JMP 134 / LMG 1197) (Cupriavidus necator (strain JMP 134)) protein is UPF0225 protein Reut_A0143.